The chain runs to 425 residues: Enolase (425 aa).

Gln162 serves as a coordination point for (2R)-2-phosphoglycerate. Glu204 functions as the Proton donor in the catalytic mechanism. Mg(2+) is bound by residues Asp241, Glu284, and Asp311. The (2R)-2-phosphoglycerate site is built by Lys336, Arg365, Ser366, and Lys387. Residue Lys336 is the Proton acceptor of the active site.

Belongs to the enolase family. Requires Mg(2+) as cofactor.

It localises to the cytoplasm. It is found in the secreted. The protein resides in the cell surface. It catalyses the reaction (2R)-2-phosphoglycerate = phosphoenolpyruvate + H2O. The protein operates within carbohydrate degradation; glycolysis; pyruvate from D-glyceraldehyde 3-phosphate: step 4/5. Its function is as follows. Catalyzes the reversible conversion of 2-phosphoglycerate (2-PG) into phosphoenolpyruvate (PEP). It is essential for the degradation of carbohydrates via glycolysis. The chain is Enolase from Brucella melitensis biotype 2 (strain ATCC 23457).